The sequence spans 299 residues: Taste receptor type 2 member 4 (299 aa).

At 1-9 the chain is on the extracellular side; that stretch reads MLRLFYFSA. Residues 10 to 30 traverse the membrane as a helical segment; that stretch reads VIASVILNFVGIIMNLFITVV. Topologically, residues 31–46 are cytoplasmic; it reads NCKTWVKSHRISSSDR. Residues 47–67 form a helical membrane-spanning segment; sequence ILFSLGITRFLMLGLFLVNTI. Over 68–81 the chain is Extracellular; sequence YFVSSNMERSVYLS. Residues 82–102 form a helical membrane-spanning segment; sequence AFFVLCFMFLDSSSLWFVTLL. Topologically, residues 103-131 are cytoplasmic; it reads NILYCVKITNFQHSVFLLLKRSISPKIPR. Residues 132–152 traverse the membrane as a helical segment; it reads LLLAFVLISAFTTCLYITLSQ. Over 153-172 the chain is Extracellular; that stretch reads ASPFPELVTTRNNTSFNISE. N-linked (GlcNAc...) asparagine glycans are attached at residues Asn164, Asn165, and Asn169. Residues 173–193 traverse the membrane as a helical segment; sequence GILSLVVSLVLSSSLQFIINV. The Cytoplasmic portion of the chain corresponds to 194–230; it reads TSASLLIHSLRRHIQKMQKNATGFWNPQMEAHVGAMK. Residues 231–251 traverse the membrane as a helical segment; sequence LMVYFLILYIPYSVATLVQYL. Residues 252–262 are Extracellular-facing; the sequence is PFYAGMDMGTK. A helical membrane pass occupies residues 263-283; it reads SICLIFATLYSPGHSVLIIIT. Over 284–299 the chain is Cytoplasmic; the sequence is HPKLKTTAKKILCFKK.

Belongs to the G-protein coupled receptor T2R family.

Its subcellular location is the membrane. The protein resides in the cell projection. The protein localises to the cilium membrane. In terms of biological role, gustducin-coupled receptor implicated in the perception of bitter compounds in the oral cavity and the gastrointestinal tract. Signals through PLCB2 and the calcium-regulated cation channel TRPM5. In airway epithelial cells, binding of denatonium increases the intracellular calcium ion concentration and stimulates ciliary beat frequency. This Gorilla gorilla gorilla (Western lowland gorilla) protein is Taste receptor type 2 member 4 (TAS2R4).